Consider the following 299-residue polypeptide: Taste receptor type 2 member 4 (299 aa).

Over 1-9 the chain is Extracellular; the sequence is MLRLFYFSA. A helical transmembrane segment spans residues 10-30; sequence IIASVILNFVGIIMNLFITVV. At 31–46 the chain is on the cytoplasmic side; the sequence is NCKTWVKSHRISSSDR. Residues 47 to 67 form a helical membrane-spanning segment; that stretch reads ILFSLGITRFLMLGLFLVNTI. The Extracellular portion of the chain corresponds to 68–81; the sequence is YFVSSNTERSVYLS. The chain crosses the membrane as a helical span at residues 82 to 102; the sequence is AFFVLCFMFLDSSSLWFVTLL. Topologically, residues 103–131 are cytoplasmic; that stretch reads NILYCVKITNFQHSVFLLLKRNISPKIPR. Residues 132–152 traverse the membrane as a helical segment; it reads LLLACVLISAFTTCLYITLSQ. Residues 153–172 lie on the Extracellular side of the membrane; that stretch reads ASPFPELVTTRNNTSFNINE. Residues Asn-164 and Asn-165 are each glycosylated (N-linked (GlcNAc...) asparagine). The chain crosses the membrane as a helical span at residues 173-193; sequence GILSLVVSLVLSSSLQFIINV. Topologically, residues 194 to 230 are cytoplasmic; it reads TSASLLIHSLRRHIQKMQKNATGFWNPQTEAHVGAMK. A helical transmembrane segment spans residues 231-251; the sequence is LMVYFLILYIPYSVATLVQYL. Residues 252 to 262 are Extracellular-facing; sequence PFYAGMDMGTK. The chain crosses the membrane as a helical span at residues 263–283; sequence SICLIFATLYSPGHSVLIIIT. Residues 284–299 lie on the Cytoplasmic side of the membrane; the sequence is HPKLKTTAKKILCFKK.

It belongs to the G-protein coupled receptor T2R family.

The protein resides in the membrane. It localises to the cell projection. It is found in the cilium membrane. Functionally, gustducin-coupled receptor implicated in the perception of bitter compounds in the oral cavity and the gastrointestinal tract. Signals through PLCB2 and the calcium-regulated cation channel TRPM5. In airway epithelial cells, binding of denatonium increases the intracellular calcium ion concentration and stimulates ciliary beat frequency. This Pan paniscus (Pygmy chimpanzee) protein is Taste receptor type 2 member 4 (TAS2R4).